We begin with the raw amino-acid sequence, 961 residues long: Glycine dehydrogenase (decarboxylating) (961 aa).

Lysine 709 carries the post-translational modification N6-(pyridoxal phosphate)lysine.

The protein belongs to the GcvP family. In terms of assembly, the glycine cleavage system is composed of four proteins: P, T, L and H. It depends on pyridoxal 5'-phosphate as a cofactor.

The catalysed reaction is N(6)-[(R)-lipoyl]-L-lysyl-[glycine-cleavage complex H protein] + glycine + H(+) = N(6)-[(R)-S(8)-aminomethyldihydrolipoyl]-L-lysyl-[glycine-cleavage complex H protein] + CO2. Its function is as follows. The glycine cleavage system catalyzes the degradation of glycine. The P protein binds the alpha-amino group of glycine through its pyridoxal phosphate cofactor; CO(2) is released and the remaining methylamine moiety is then transferred to the lipoamide cofactor of the H protein. This is Glycine dehydrogenase (decarboxylating) from Teredinibacter turnerae (strain ATCC 39867 / T7901).